The primary structure comprises 702 residues: MASGEGILTDGQWKKLEIATHNSGSLSSSPKSHTLFADLNIKSPTGGKGPVAGIPNRHVRRTHSGKHIRVKKEGAGGKGTWGKLLDTDDGDSCIDKNDPNYDSGEDAYDGLVDSPVSDPLNDYKKSVVSIIDEYFSTGDVKVAASDLRELGSSEYHPYFTKRLVSMAMDRHDKEKEMASVLLSALYADVILPDQIRDGFIRLLRSVDDLAVDILDAVNVLALFIARAIVDEILPPVFLVRSKKILPESCKGFQVIVTAEKSYLSAPHHAELVEKKWGGSTHTTVEETKKKISEILKEYVENGDTYEACRCIRELGVSFFHHEVVKRALVLAMDSPTAESLVLKLLKETAEEGLISSSQMVKGFFRVAESLDDLALDIPSAKKLFDSIVPKAISGGWLDDSFKITSDQDGEKSSQDGKLRQYKKDTVNIIQEYFLSDDIPELIRSLQDLGAPEYNPVFLKRLITLALDRKNREKEMASVLLSALHMELFSTEDFINGFIMLLESAEDTALDIMDASNELALFLARAVIDDVLAPLNLEDISTKLPPKSTGTETVRSARSLISARHAGERLLRSWGGGTGWIVEDAKDKISKLLEEYETGGVTSEACQCIRDLGMPFFNHEVVKKALVMAMEKQNDRLLNLLEECFGEGLITTNQMTKGFGRVNDSLDDLSLDIPNAKEKFELYASHAMDNGWILPEFGISATQ.

Residues 39-66 (LNIKSPTGGKGPVAGIPNRHVRRTHSGK) are disordered. Positions 57–66 (RHVRRTHSGK) are enriched in basic residues. One can recognise an MI 1 domain in the interval 122 to 243 (DYKKSVVSII…PPVFLVRSKK (122 aa)). Residues 273–280 (EKKWGGST) carry the Nuclear localization signal 1 motif. 3 consecutive MI domains span residues 286 to 407 (ETKK…TSDQ), 420 to 541 (QYKK…DIST), and 583 to 702 (DAKD…SATQ). A Nuclear localization signal 2 motif is present at residues 458-465 (LKRLITLA).

It belongs to the PDCD4 family. In terms of assembly, binds to EIF4A1, S6K1 and S6K2. The association with ribosomes is modulated by cellular energy status and TOR activity. In terms of processing, phosphorylation by S6 kinases (e.g. S6K1 and S6K2) is modulated by cellular energy status and TOR activity. As to expression, mostly expressed in vegetative tissues, such as leaves, roots and stems, and, to a lower extent, in reproductive tissues, such as flower buds and flowers.

The protein localises to the nucleus. It is found in the cytoplasm. The protein resides in the cytosol. Involved in target of rapamycin (TOR)-regulated translation control, especially under energy-deficient conditions. This Arabidopsis thaliana (Mouse-ear cress) protein is MA3 DOMAIN-CONTAINING TRANSLATION REGULATORY FACTOR 1.